The sequence spans 175 residues: Large ribosomal subunit protein uL6 (175 aa).

It belongs to the universal ribosomal protein uL6 family. In terms of assembly, part of the 50S ribosomal subunit.

Functionally, this protein binds to the 23S rRNA, and is important in its secondary structure. It is located near the subunit interface in the base of the L7/L12 stalk, and near the tRNA binding site of the peptidyltransferase center. The chain is Large ribosomal subunit protein uL6 from Xylella fastidiosa (strain 9a5c).